The chain runs to 602 residues: Elongation factor 4 (602 aa).

The tr-type G domain maps to lysine 7–serine 190. Residues aspartate 19 to threonine 24 and asparagine 137 to aspartate 140 each bind GTP.

It belongs to the TRAFAC class translation factor GTPase superfamily. Classic translation factor GTPase family. LepA subfamily.

Its subcellular location is the cell membrane. The catalysed reaction is GTP + H2O = GDP + phosphate + H(+). Its function is as follows. Required for accurate and efficient protein synthesis under certain stress conditions. May act as a fidelity factor of the translation reaction, by catalyzing a one-codon backward translocation of tRNAs on improperly translocated ribosomes. Back-translocation proceeds from a post-translocation (POST) complex to a pre-translocation (PRE) complex, thus giving elongation factor G a second chance to translocate the tRNAs correctly. Binds to ribosomes in a GTP-dependent manner. The protein is Elongation factor 4 of Clostridium acetobutylicum (strain ATCC 824 / DSM 792 / JCM 1419 / IAM 19013 / LMG 5710 / NBRC 13948 / NRRL B-527 / VKM B-1787 / 2291 / W).